Reading from the N-terminus, the 229-residue chain is Orotidine 5'-phosphate decarboxylase (229 aa).

Substrate is bound by residues Asp11, Lys33, 61–70 (DMKLFDISAT), Thr116, Arg179, Gln188, Gly208, and Arg209. Lys63 serves as the catalytic Proton donor.

The protein belongs to the OMP decarboxylase family. Type 1 subfamily. In terms of assembly, homodimer.

It catalyses the reaction orotidine 5'-phosphate + H(+) = UMP + CO2. The protein operates within pyrimidine metabolism; UMP biosynthesis via de novo pathway; UMP from orotate: step 2/2. Functionally, catalyzes the decarboxylation of orotidine 5'-monophosphate (OMP) to uridine 5'-monophosphate (UMP). This Jannaschia sp. (strain CCS1) protein is Orotidine 5'-phosphate decarboxylase.